Here is a 421-residue protein sequence, read N- to C-terminus: General transcription factor IIH subunit 2 (421 aa).

The segment at 1–26 (MSNQRKRSNDEREEEDDEDAEGIGEW) is disordered. A compositionally biased stretch (acidic residues) spans 11-24 (EREEEDDEDAEGIG). Residues 83 to 272 (YLYIVIDFSR…IAEFAIANLI (190 aa)) form the VWFA domain. An RING-type zinc finger spans residues 362–408 (CFGCQQSLIGAGNKPVPCVTCRKCKHYFCLDCDIYIHESLHNCPGCE).

It belongs to the GTF2H2 family. In terms of assembly, component of the 7-subunit TFIIH core complex composed of XPB, XPD, TFB1/GTF2H1, GTF2H2/P44, TFB4/GTF2H3, TFB2/GTF2H4 and TFB5/GTF2H5, which is active in NER. The core complex associates with the 3-subunit CDK-activating kinase (CAK) module composed of CYCH1/cyclin H1, CDKD and MAT1/At4g30820 to form the 10-subunit holoenzyme (holo-TFIIH) active in transcription. Interacts with XPD.

It localises to the nucleus. In terms of biological role, component of the general transcription and DNA repair factor IIH (TFIIH) core complex, which is involved in general and transcription-coupled nucleotide excision repair (NER) of damaged DNA and, when complexed to CAK, in RNA transcription by RNA polymerase II. In NER, TFIIH acts by opening DNA around the lesion to allow the excision of the damaged oligonucleotide and its replacement by a new DNA fragment. In transcription, TFIIH has an essential role in transcription initiation. When the pre-initiation complex (PIC) has been established, TFIIH is required for promoter opening and promoter escape. Phosphorylation of the C-terminal tail (CTD) of the largest subunit of RNA polymerase II by the kinase module CAK controls the initiation of transcription. Can restore UV resistance in the NER-deficient ssl1-1 yeast mutant. The sequence is that of General transcription factor IIH subunit 2 from Arabidopsis thaliana (Mouse-ear cress).